Consider the following 774-residue polypeptide: Neprilysin-2 (774 aa).

The Cytoplasmic portion of the chain corresponds to 1–20; sequence MQTVIQNPNWWRRRNKLEKS. The helical; Signal-anchor for type II membrane protein transmembrane segment at 21–41 threads the bilayer; it reads LLVSLGIMFVVLATGFGLWIG. Residues 42-774 are Extracellular-facing; the sequence is KVLRTSPPSN…MNPVQKCEVW (733 aa). The interval 50 to 79 is disordered; the sequence is SNPQATALHGDSTTINQVPTGTASKGKSGD. The segment covering 60 to 74 has biased composition (polar residues); sequence DSTTINQVPTGTASK. Residues 83 to 774 form the Peptidase M13 domain; sequence VCLTQECIHT…MNPVQKCEVW (692 aa). 5 disulfides stabilise this stretch: cysteine 84/cysteine 89, cysteine 107/cysteine 759, cysteine 115/cysteine 719, cysteine 171/cysteine 424, and cysteine 646/cysteine 771. N-linked (GlcNAc...) asparagine glycosylation is found at asparagine 173, asparagine 239, asparagine 264, asparagine 305, asparagine 315, asparagine 358, and asparagine 554. Histidine 609 provides a ligand contact to Zn(2+). Glutamate 610 is an active-site residue. A Zn(2+)-binding site is contributed by histidine 613. N-linked (GlcNAc...) asparagine glycosylation is present at asparagine 653. Glutamate 671 contacts Zn(2+). Aspartate 675 functions as the Proton donor in the catalytic mechanism.

Belongs to the peptidase M13 family. Zn(2+) is required as a cofactor. Post-translationally, N-glycosylated. The soluble form is probably produced by proteolytic cleavage. In terms of tissue distribution, detected in the stellate cells in the main segment and the bar-shaped cells in the initial segment of male and female Malpighian tubules (at protein level). Expressed in the spermatheca (at protein level). Expressed in the somatic cyst cells of the testes, with increased expression at the tail end of elongating cysts. Expressed in the ovaries with strong expression in the posterior polar cells and in border cells of stage 8, 9, and 10 follicles. In adults and third-instar larvae, expressed in the brain, ventral ganglion, and stellate cells. Also expressed in the foregut and the imaginal disks (eye, antennal and leg) of third-instar larvae. In stage 17 embryos, expressed in the tracheal system, foregut, hindgut and epidermis. Also expressed in the stellate cell progenitors of the caudal visceral mesoderm in embryos.

The protein resides in the cell membrane. It is found in the secreted. It catalyses the reaction Preferential cleavage of polypeptides between hydrophobic residues, particularly with Phe or Tyr at P1'.. In terms of biological role, metalloendoprotease which cleaves peptides such as tachykinin peptide TK-2 at the amino side of hydrophobic residues. Functions in female fertility, embryogenesis and memory formation. Required in females for normal patterns of egg laying, probably due to its function in sperm retention and preventing sperm displacement by rival ejaculates. Also required for normal patterns of hatching due to its important role in early embryonic development. Required in the dorsal paired medial neurons for the proper formation of middle-term memory. Also required in the mushroom body neurons where it functions redundantly with neprilysins Nep3 and Nep4 in normal long-term memory formation. This is Neprilysin-2 from Drosophila melanogaster (Fruit fly).